The following is a 182-amino-acid chain: ADP-ribosylation factor 3 (182 aa).

Glycine 2 carries N-myristoyl glycine lipidation. GTP-binding positions include 24–31 (GLDNAGKT), 67–71 (DLGGQ), and 126–129 (NKQD).

Belongs to the small GTPase superfamily. Arf family. As to quaternary structure, interacts with GRIP; but preferentially when bound to GTP.

Its subcellular location is the golgi apparatus. In terms of biological role, GTP-binding protein involved in protein trafficking; may modulate vesicle budding and uncoating within the Golgi apparatus. This is ADP-ribosylation factor 3 (ARF3) from Arabidopsis thaliana (Mouse-ear cress).